A 271-amino-acid chain; its full sequence is MNSKLSLSTKLSSSGKTQLAEYFATPPFKVITLPSYDDAWANGLNAMQMSSSPGVLAGDLLEIDISLAKLTALSLNTQAFTRVQAMNEGDSAMQTTHILLAENSRLFYLPHPLVLHKDSVFKQQTQIEMGEQSELIYGEIVAIGRVLNDERFAFRQFSSHLKIYTLKDDGKKRPLVSDCIQWLPSKMNLTALSQMENYSHQGSLTYLNLAKNNAEIKQQVQALQQQSTEEKDLLIGISQLNEYGLMVRVLGCRAEQIQKLFEKIGRLLKSV.

It belongs to the UreD family. In terms of assembly, ureD, UreF and UreG form a complex that acts as a GTP-hydrolysis-dependent molecular chaperone, activating the urease apoprotein by helping to assemble the nickel containing metallocenter of UreC. The UreE protein probably delivers the nickel.

The protein localises to the cytoplasm. In terms of biological role, required for maturation of urease via the functional incorporation of the urease nickel metallocenter. In Haemophilus influenzae (strain 86-028NP), this protein is Urease accessory protein UreD.